Here is a 169-residue protein sequence, read N- to C-terminus: Putative cysteine protease YraA (169 aa).

In terms of domain architecture, PfpI endopeptidase spans 3–169 (KKIAVLVTDQ…FNRESLNLLK (167 aa)). Cys103 (nucleophile) is an active-site residue. His104 is a catalytic residue.

Belongs to the peptidase C56 family.

Functionally, functions in the protection against aldehyde-stress, possibly by degrading damaged proteins. This is Putative cysteine protease YraA (yraA) from Bacillus subtilis (strain 168).